We begin with the raw amino-acid sequence, 619 residues long: Translation initiation factor IF-2 (619 aa).

Residues 120–289 (PRPPIVTIMG…ILLLGEVEGY (170 aa)) form the tr-type G domain. Residues 129-136 (GHVDHGKT) form a G1 region. 129–136 (GHVDHGKT) provides a ligand contact to GTP. A G2 region spans residues 154–158 (GITQK). Residues 176-179 (DTPG) form a G3 region. Residues 176-180 (DTPGH) and 230-233 (NKMD) contribute to the GTP site. Positions 230–233 (NKMD) are G4. A G5 region spans residues 266 to 268 (SAL).

Belongs to the TRAFAC class translation factor GTPase superfamily. Classic translation factor GTPase family. IF-2 subfamily.

The protein resides in the cytoplasm. Its function is as follows. One of the essential components for the initiation of protein synthesis. Protects formylmethionyl-tRNA from spontaneous hydrolysis and promotes its binding to the 30S ribosomal subunits. Also involved in the hydrolysis of GTP during the formation of the 70S ribosomal complex. This chain is Translation initiation factor IF-2 (infB), found in Mycoplasma genitalium (strain ATCC 33530 / DSM 19775 / NCTC 10195 / G37) (Mycoplasmoides genitalium).